Reading from the N-terminus, the 230-residue chain is Small ribosomal subunit protein uS3 (230 aa).

A KH type-2 domain is found at 39-107 (VRKFLVEKLQ…PAQINIAEIR (69 aa)).

This sequence belongs to the universal ribosomal protein uS3 family. Part of the 30S ribosomal subunit. Forms a tight complex with proteins S10 and S14.

In terms of biological role, binds the lower part of the 30S subunit head. Binds mRNA in the 70S ribosome, positioning it for translation. This is Small ribosomal subunit protein uS3 from Shewanella putrefaciens (strain CN-32 / ATCC BAA-453).